Consider the following 332-residue polypeptide: 1-acyl-sn-glycerol-3-phosphate acyltransferase CHLREDRAFT_174358 (332 aa).

Residues 96 to 116 (FLLSLPLFVTMMVMAPLVLAF) form a helical membrane-spanning segment. The HXXXXD motif motif lies at 163–168 (HQSFLD). The chain crosses the membrane as a helical span at residues 185-205 (TSNFLIPIIGWSMFLTGHVMI). The EGTR motif motif lies at 235–238 (EGTR).

It belongs to the 1-acyl-sn-glycerol-3-phosphate acyltransferase family.

It localises to the membrane. The catalysed reaction is a 1-acyl-sn-glycero-3-phosphate + an acyl-CoA = a 1,2-diacyl-sn-glycero-3-phosphate + CoA. Its pathway is phospholipid metabolism; CDP-diacylglycerol biosynthesis; CDP-diacylglycerol from sn-glycerol 3-phosphate: step 2/3. Its function is as follows. Converts lysophosphatidic acid (LPA) into phosphatidic acid by incorporating an acyl moiety at the sn-2 position of the glycerol backbone. The sequence is that of 1-acyl-sn-glycerol-3-phosphate acyltransferase CHLREDRAFT_174358 from Chlamydomonas reinhardtii (Chlamydomonas smithii).